A 331-amino-acid polypeptide reads, in one-letter code: Olfactory receptor 10S1 (331 aa).

Topologically, residues 1 to 38 (MTSRSVCEKMTMTTENPNQTVVSHFFLEGLRYTAKHSS) are extracellular. N-linked (GlcNAc...) asparagine glycosylation is present at N18. The helical transmembrane segment at 39 to 59 (LFFLLFLLIYSITVAGNLLIL) threads the bilayer. Over 60–67 (LTVGSDSH) the chain is Cytoplasmic. A helical transmembrane segment spans residues 68–88 (LSLPMYHFLGHLSFLDACLST). At 89-113 (VTVPKVMAGLLTLDGKVISFEGCAV) the chain is on the extracellular side. A disulfide bond links C111 and C203. A helical transmembrane segment spans residues 114-134 (QLYCFHFLASTECFLYTVMAY). Residues 135 to 153 (DRYLAICQPLHYPVAMNRR) are Cytoplasmic-facing. A helical membrane pass occupies residues 154–174 (MCAEMAGITWAIGATHAAIHT). Topologically, residues 175–211 (SLTFRLLYCGPCHIAYFFCDIPPVLKLACTDTTINEL) are extracellular. The helical transmembrane segment at 212 to 231 (VMLASIGIVAAGCLILIVIS) threads the bilayer. The Cytoplasmic segment spans residues 232 to 251 (YIFIVAAVLRIRTAQGRQRA). Residues 252 to 272 (FSPCTAQLTGVLLYYVPPVCI) form a helical membrane-spanning segment. Residues 273–283 (YLQPRSSEAGA) are Extracellular-facing. Residues 284-304 (GAPAVFYTIVTPMLNPFIYTL) traverse the membrane as a helical segment. The Cytoplasmic segment spans residues 305 to 331 (RNKEVKHALQRLLCSSFRESTAGSPPP).

Belongs to the G-protein coupled receptor 1 family.

The protein resides in the cell membrane. Its function is as follows. Odorant receptor. The chain is Olfactory receptor 10S1 (OR10S1) from Homo sapiens (Human).